A 171-amino-acid chain; its full sequence is ATP synthase subunit b (171 aa).

A helical membrane pass occupies residues 31-51 (FFVVLAIFLVVLAVIGTFVVP).

The protein belongs to the ATPase B chain family. As to quaternary structure, F-type ATPases have 2 components, F(1) - the catalytic core - and F(0) - the membrane proton channel. F(1) has five subunits: alpha(3), beta(3), gamma(1), delta(1), epsilon(1). F(0) has three main subunits: a(1), b(2) and c(10-14). The alpha and beta chains form an alternating ring which encloses part of the gamma chain. F(1) is attached to F(0) by a central stalk formed by the gamma and epsilon chains, while a peripheral stalk is formed by the delta and b chains.

The protein localises to the cell membrane. F(1)F(0) ATP synthase produces ATP from ADP in the presence of a proton or sodium gradient. F-type ATPases consist of two structural domains, F(1) containing the extramembraneous catalytic core and F(0) containing the membrane proton channel, linked together by a central stalk and a peripheral stalk. During catalysis, ATP synthesis in the catalytic domain of F(1) is coupled via a rotary mechanism of the central stalk subunits to proton translocation. In terms of biological role, component of the F(0) channel, it forms part of the peripheral stalk, linking F(1) to F(0). The chain is ATP synthase subunit b from Mycobacterium bovis (strain ATCC BAA-935 / AF2122/97).